A 179-amino-acid polypeptide reads, in one-letter code: Methylated-DNA--protein-cysteine methyltransferase (179 aa).

The active-site Nucleophile; methyl group acceptor is the cysteine 130.

It belongs to the MGMT family.

The protein localises to the cytoplasm. The enzyme catalyses a 6-O-methyl-2'-deoxyguanosine in DNA + L-cysteinyl-[protein] = S-methyl-L-cysteinyl-[protein] + a 2'-deoxyguanosine in DNA. The catalysed reaction is a 4-O-methyl-thymidine in DNA + L-cysteinyl-[protein] = a thymidine in DNA + S-methyl-L-cysteinyl-[protein]. Its function is as follows. Involved in the cellular defense against the biological effects of O6-methylguanine (O6-MeG) and O4-methylthymine (O4-MeT) in DNA. Repairs the methylated nucleobase in DNA by stoichiometrically transferring the methyl group to a cysteine residue in the enzyme. This is a suicide reaction: the enzyme is irreversibly inactivated. The protein is Methylated-DNA--protein-cysteine methyltransferase of Haemophilus influenzae (strain ATCC 51907 / DSM 11121 / KW20 / Rd).